Consider the following 214-residue polypeptide: Ornithine decarboxylase antizyme 1 (214 aa).

The protein belongs to the ODC antizyme family. In terms of assembly, interacts with ODC1 and thereby sterically blocks ODC homodimerization.

Functionally, ornithine decarboxylase (ODC) antizyme protein that negatively regulates ODC activity and intracellular polyamine biosynthesis and uptake in response to increased intracellular polyamine levels. Binds to ODC monomers, inhibiting the assembly of the functional ODC homodimer, and targets the monomers for ubiquitin-independent proteolytic destruction by the 26S proteasome. The protein is Ornithine decarboxylase antizyme 1 (oaz1a) of Danio rerio (Zebrafish).